The following is a 199-amino-acid chain: 5'-deoxynucleotidase YfbR (199 aa).

Substrate contacts are provided by residues 18–19 (RW) and His33. An HD domain is found at 30–142 (VSEHSLQVAM…VKQADALCAY (113 aa)). 3 residues coordinate a divalent metal cation: His33, His68, and Asp69. Residues Asp69, 77-80 (DLPT), and Asp137 each bind substrate. Asp137 is an a divalent metal cation binding site.

This sequence belongs to the 5DNU family. As to quaternary structure, homodimer. It depends on a divalent metal cation as a cofactor.

The protein resides in the cytoplasm. The enzyme catalyses a 2'-deoxyribonucleoside 5'-phosphate + H2O = a 2'-deoxyribonucleoside + phosphate. Catalyzes the strictly specific dephosphorylation of 2'-deoxyribonucleoside 5'-monophosphates. The protein is 5'-deoxynucleotidase YfbR of Salmonella typhi.